A 574-amino-acid polypeptide reads, in one-letter code: Glycine--tRNA ligase (574 aa).

Positions 96 and 162 each coordinate substrate. ATP-binding positions include 194–196 (RNE), 204–209 (IRLREF), 327–328 (EC), and 450–453 (GIDR). 209–213 (FTQAE) is a substrate binding site. Position 446-450 (446-450 (EPSYG)) interacts with substrate.

It belongs to the class-II aminoacyl-tRNA synthetase family.

It is found in the cytoplasm. The enzyme catalyses tRNA(Gly) + glycine + ATP = glycyl-tRNA(Gly) + AMP + diphosphate. Catalyzes the attachment of glycine to tRNA(Gly). This Methanococcus maripaludis (strain DSM 14266 / JCM 13030 / NBRC 101832 / S2 / LL) protein is Glycine--tRNA ligase.